Here is a 245-residue protein sequence, read N- to C-terminus: 7-cyano-7-deazaguanine synthase 2 (245 aa).

An ATP-binding site is contributed by 12-22; that stretch reads FSGGQDSTTCL. 4 residues coordinate Zn(2+): Cys-200, Cys-215, Cys-218, and Cys-221.

The protein belongs to the QueC family. Zn(2+) serves as cofactor.

It carries out the reaction 7-carboxy-7-deazaguanine + NH4(+) + ATP = 7-cyano-7-deazaguanine + ADP + phosphate + H2O + H(+). Its pathway is purine metabolism; 7-cyano-7-deazaguanine biosynthesis. Its function is as follows. Catalyzes the ATP-dependent conversion of 7-carboxy-7-deazaguanine (CDG) to 7-cyano-7-deazaguanine (preQ(0)). This chain is 7-cyano-7-deazaguanine synthase 2, found in Mesorhizobium japonicum (strain LMG 29417 / CECT 9101 / MAFF 303099) (Mesorhizobium loti (strain MAFF 303099)).